A 1996-amino-acid chain; its full sequence is MMRTTEDFHKPSATLNSNTATKGRYIYLEAFLEGGAPWGFTLKGGLEHGEPLIISKVEEGGKADTLSSKLQAGDEVVHINEVTLSSSRKEAVSLVKGSYKTLRLVVRRDVCTDPGHADTGASNFVSPEHLTSGPQHRKAAWSGGVKLRLKHRRSEPAGRPHSWHTTKSGEKQPDASMMQISQGMIGPPWHQSYHSSSSTSDLSNYDHAYLRRSPDQCSSQGSMESLEPSGAYPPCHLSPAKSTGSIDQLSHFHNKRDSAYSSFSTSSSILEYPHPGISGRERSGSMDNTSARGGLLEGMRQADIRYVKTVYDTRRGVSAEYEVNSSALLLQGREARASANGQGYDKWSNIPRGKGVPPPSWSQQCPSSLETATDNLPPKVGAPLPPARSDSYAAFRHRERPSSWSSLDQKRLCRPQANSLGSLKSPFIEEQLHTVLEKSPENSPPVKPKHNYTQKAQPGQPLLPTSIYPVPSLEPHFAQVPQPSVSSNGMLYPALAKESGYIAPQGACNKMATIDENGNQNGSGRPGFAFCQPLEHDLLSPVEKKPEATAKYVPSKVHFCSVPENEEDASLKRHLTPPQGNSPHSNERKSTHSNKPSSHPHSLKCPQAQAWQAGEDKRSSRLSEPWEGDFQEDHNANLWRRLEREGLGQSLSGNFGKTKSAFSSLQNIPESLRRHSSLELGRGTQEGYPGGRPTCAVNTKAEDPGRKAAPDLGSHLDRQVSYPRPEGRTGASASFNSTDPSPEEPPAPSHPHTSSLGRRGPGPGSASALQGFQYGKPHCSVLEKVSKFEQREQGSQRPSVGGSGFGHNYRPHRTVSTSSTSGNDFEETKAHIRFSESAEPLGNGEQHFKNGELKLEEASRQPCGQQLSGGASDSGRGPQRPDARLLRSQSTFQLSSEPEREPEWRDRPGSPESPLLDAPFSRAYRNSIKDAQSRVLGATSFRRRDLELGAPVASRSWRPRPSSAHVGLRSPEASASASPHTPRERHSVTPAEGDLARPVPPAARRGARRRLTPEQKKRSYSEPEKMNEVGIVEEAEPAPLGPQRNGMRFPESSVADRRRLFERDGKACSTLSLSGPELKQFQQSALADYIQRKTGKRPTSAAGCSLQEPGPLRERAQSAYLQPGPAALEGSGLASASSLSSLREPSLQPRREATLLPATVAETQQAPRDRSSSFAGGRRLGERRRGDLLSGANGGTRGTQRGDETPREPSSWGARAGKSMSAEDLLERSDVLAGPVHVRSRSSPATADKRQDVLLGQDSGFGLVKDPCYLAGPGSRSLSCSERGQEEMLPLFHHLTPRWGGSGCKAIGDSSVPSECPGTLDHQRQASRTPCPRPPLAGTQGLVTDTRAAPLTPIGTPLPSAIPSGYCSQDGQTGRQPLPPYTPAMMHRSNGHTLTQPPGPRGCEGDGPEHGVEEGTRKRVSLPQWPPPSRAKWAHAAREDSLPEESSAPDFANLKHYQKQQSLPSLCSTSDPDTPLGAPSTPGRISLRISESVLRDSPPPHEDYEDEVFVRDPHPKATSSPTFEPLPPPPPPPPSQETPVYSMDDFPPPPPHTVCEAQLDSEDPEGPRPSFNKLSKVTIARERHMPGAAHVVGSQTLASRLQTSIKGSEAESTPPSFMSVHAQLAGSLGGQPAPIQTQSLSHDPVSGTQGLEKKVSPDPQKSSEDIRTEALAKEIVHQDKSLADILDPDSRLKTTMDLMEGLFPRDVNLLKENSVKRKAIQRTVSSSGCEGKRNEDKEAVSMLVNCPAYYSVSAPKAELLNKIKEMPAEVNEEEEQADVNEKKAELIGSLTHKLETLQEAKGSLLTDIKLNNALGEEVEALISELCKPNEFDKYRMFIGDLDKVVNLLLSLSGRLARVENVLSGLGEDASNEERSSLYEKRKILAGQHEDARELKENLDRRERVVLGILANYLSEEQLQDYQHFVKMKSTLLIEQRKLDDKIKLGQEQVKCLLESLPSDFIPKAGALALPPNLTSEPIPAGGCTFSGIFPTLTSPL.

Residues 25–110 (YIYLEAFLEG…TLRLVVRRDV (86 aa)) form the PDZ domain. Positions 150-173 (KHRRSEPAGRPHSWHTTKSGEKQP) are disordered. S213 carries the phosphoserine modification. Disordered regions lie at residues 340-389 (NGQG…PARS), 437-468 (EKSP…TSIY), 568-629 (DASL…WEGD), 673-772 (RRHS…LQGF), and 788-1053 (FEQR…PESS). Phosphoserine occurs at positions 439 and 443. The segment covering 700 to 718 (KAEDPGRKAAPDLGSHLDR) has biased composition (basic and acidic residues). Residues 750–768 (HPHTSSLGRRGPGPGSASA) show a composition bias toward low complexity. The segment covering 814–823 (TVSTSSTSGN) has biased composition (polar residues). S816 is subject to Phosphoserine. Composition is skewed to basic and acidic residues over residues 826–836 (EETKAHIRFSE) and 846–859 (QHFK…EEAS). Polar residues-rich tracts occupy residues 862–871 (PCGQQLSGGA) and 887–896 (RSQSTFQLSS). At S890 the chain carries Phosphoserine. Residues 897 to 909 (EPEREPEWRDRPG) show a composition bias toward basic and acidic residues. Residues S910 and S913 each carry the phosphoserine modification. In terms of domain architecture, ASD1 spans 928–1030 (IKDAQSRVLG…SEPEKMNEVG (103 aa)). Low complexity predominate over residues 950–964 (APVASRSWRPRPSSA). Position 970 is a phosphoserine (S970). Positions 1011 to 1027 (LTPEQKKRSYSEPEKMN) are enriched in basic and acidic residues. A phosphoserine mark is found at S1069 and S1072. 4 disordered regions span residues 1093–1115 (KTGK…LRER), 1137–1223 (SSLS…MSAE), 1315–1573 (ECPG…SFNK), and 1627–1665 (SLGG…SSED). Low complexity predominate over residues 1137–1148 (SSLSSLREPSLQ). S1221 is modified (phosphoserine). A compositionally biased stretch (polar residues) spans 1366–1375 (YCSQDGQTGR). The span at 1403-1417 (CEGDGPEHGVEEGTR) shows a compositional bias: basic and acidic residues. The residue at position 1441 (S1441) is a Phosphoserine. Positions 1459–1472 (KQQSLPSLCSTSDP) are enriched in polar residues. Residues 1498–1515 (PPPHEDYEDEVFVRDPHP) are compositionally biased toward basic and acidic residues. Residues 1524–1536 (EPLPPPPPPPPSQ) are compositionally biased toward pro residues. The span at 1634–1649 (PIQTQSLSHDPVSGTQ) shows a compositional bias: polar residues. A compositionally biased stretch (basic and acidic residues) spans 1651–1665 (LEKKVSPDPQKSSED). In terms of domain architecture, ASD2 spans 1669–1957 (EALAKEIVHQ…QVKCLLESLP (289 aa)).

Belongs to the shroom family. In terms of assembly, interacts with F-actin. Interacts with ROCK1.

It localises to the cell junction. The protein localises to the adherens junction. The protein resides in the cytoplasm. It is found in the cytoskeleton. Its subcellular location is the apical cell membrane. Functionally, controls cell shape changes in the neuroepithelium during neural tube closure. Induces apical constriction in epithelial cells by promoting the apical accumulation of F-actin and myosin II, and probably by bundling stress fibers. Induces apicobasal cell elongation by redistributing gamma-tubulin and directing the assembly of robust apicobasal microtubule arrays. This chain is Protein Shroom3 (SHROOM3), found in Homo sapiens (Human).